A 309-amino-acid chain; its full sequence is ATP synthase gamma chain (309 aa).

The protein belongs to the ATPase gamma chain family. F-type ATPases have 2 components, CF(1) - the catalytic core - and CF(0) - the membrane proton channel. CF(1) has five subunits: alpha(3), beta(3), gamma(1), delta(1), epsilon(1). CF(0) has three main subunits: a, b and c.

It is found in the cell membrane. In terms of biological role, produces ATP from ADP in the presence of a proton gradient across the membrane. The gamma chain is believed to be important in regulating ATPase activity and the flow of protons through the CF(0) complex. The chain is ATP synthase gamma chain from Salinispora arenicola (strain CNS-205).